Here is a 520-residue protein sequence, read N- to C-terminus: MLKNIINKKNLFINNQQNIFQIIKRNKMTDSTVDNKGYIVGIYENEEFTPLGQQLNEKTNGHLLKSIKLSDTKGKVGDNLVLYNVTPEVSRVAIVGLGKKENNNSTTYEKNENTRKAIGSGVKALKSKNATHLTIDSNIGDAKQTAEGAFLSNFKFDFKTGTSGKTANSTNESIQVQLSPSPSSEECFKEGKILAESQNFARVLMETPANLLTPTNFVQHVSSQMKELIDSGKVEMIVREEQWVKDQKMGMFWGVAKGSDEPLKFLELHYRGASADGKDSIVYVGKGITFDSGGISIKPSANMGLMKGDMGGAATAVSAMFGVASLGLKVNLITITPLCENMPSGKATKPGDILTAANGKTVEVDNTDAEGRLILGDALHYACSFKPTHIIDIATLTGAIDVALGQHYAGCFTTTDSLWDQLNECGNISGERLWRMPLIPEYRKQMETSKVADLINSAGRSGGACCAAGFLKEFITADQSWSHLDIAGVMSSSEDGPYIRKGMTGKPTRTLIEFAKKNQQ.

2 residues coordinate Zn(2+): K286 and D291. The active site involves K298. Residues D309, D368, and E370 each coordinate Zn(2+). R372 is a catalytic residue.

It belongs to the peptidase M17 family. As to quaternary structure, homohexamer. Zn(2+) serves as cofactor.

It localises to the cytoplasm. The catalysed reaction is Release of an N-terminal amino acid, Xaa-|-Yaa-, in which Xaa is preferably Leu, but may be other amino acids including Pro although not Arg or Lys, and Yaa may be Pro. Amino acid amides and methyl esters are also readily hydrolyzed, but rates on arylamides are exceedingly low.. It catalyses the reaction Release of N-terminal proline from a peptide.. Its function is as follows. Presumably involved in the processing and regular turnover of intracellular proteins. Catalyzes the removal of unsubstituted N-terminal amino acids from various peptides. This Dictyostelium discoideum (Social amoeba) protein is Cytosol aminopeptidase (lap).